Here is a 797-residue protein sequence, read N- to C-terminus: Glycoprotein gp2 (797 aa).

An N-terminal signal peptide occupies residues 1-25 (MGFIYARKLLLCMAVSIYAIGSTTT). Disordered regions lie at residues 24–188 (TTTE…TTAA) and 212–549 (AATT…EIVP). Low complexity predominate over residues 212 to 373 (AATTTAATTT…PDSSTGSTST (162 aa)). Residues 374–394 (AEPSSTFTLTPSTATPSTDQF) show a composition bias toward polar residues. Composition is skewed to low complexity over residues 395–430 (TGSSASTESDSTDSSTVPTTGTESITESSSTTEAST) and 445–457 (TPDGNTTSGNTTP). Polar residues predominate over residues 466 to 492 (FADTQQTPDNGVSTQHTTINDHTTANA). Residues 495–505 (HAGHHRGRAGG) are compositionally biased toward basic residues. A glycan (N-linked (GlcNAc...) asparagine; by host) is linked at asparagine 590. The helical transmembrane segment at 766 to 790 (FALVAATTLTVTILCLLCCLYCMLT) threads the bilayer.

Its subcellular location is the virion membrane. Virulence factor. The chain is Glycoprotein gp2 (EUs4) from Equine herpesvirus 1 (strain Ab4p) (EHV-1).